We begin with the raw amino-acid sequence, 156 residues long: Transcriptional repressor NrdR (156 aa).

Residues C3–C34 fold into a zinc finger. The 91-residue stretch at V49 to Q139 folds into the ATP-cone domain.

This sequence belongs to the NrdR family. The cofactor is Zn(2+).

In terms of biological role, negatively regulates transcription of bacterial ribonucleotide reductase nrd genes and operons by binding to NrdR-boxes. The polypeptide is Transcriptional repressor NrdR (Thermotoga neapolitana (strain ATCC 49049 / DSM 4359 / NBRC 107923 / NS-E)).